A 156-amino-acid chain; its full sequence is Low-salt glycan biosynthesis protein Agl8 (156 aa).

Residues 14 to 15 (RI) and Arg47 each bind substrate. The Nudix hydrolase domain occupies 25-156 (ANVPLVSVDL…YVERYLDALD (132 aa)). Residues Gly60, Glu80, and Gln130 each coordinate Mg(2+). The short motif at 61 to 82 (GTVFKNETLTDALYRVADEELG) is the Nudix box element.

It belongs to the Nudix hydrolase family. It depends on Mg(2+) as a cofactor.

It participates in protein modification; protein glycosylation. Its pathway is cell surface structure biogenesis; S-layer biogenesis. In terms of biological role, nudix hydrolase involved in N-glycan biosynthetic pathway that takes place under low-salt conditions (1.75 M instead of 3.4 M). Participates in the formation of the tetrasaccharide present at 'Asn-532' of S-layer glycoprotein Csg, consisting of a sulfated hexose, 2 hexoses and rhamnose. Mediates attachment of sugar 3 in the tetrasaccharide. In Haloferax volcanii (strain ATCC 29605 / DSM 3757 / JCM 8879 / NBRC 14742 / NCIMB 2012 / VKM B-1768 / DS2) (Halobacterium volcanii), this protein is Low-salt glycan biosynthesis protein Agl8 (agl8).